Here is a 201-residue protein sequence, read N- to C-terminus: Small ribosomal subunit protein uS4c (201 aa).

Residues Gly16–Arg37 are disordered. Residues Met89–Ile152 form the S4 RNA-binding domain.

The protein belongs to the universal ribosomal protein uS4 family. As to quaternary structure, part of the 30S ribosomal subunit. Contacts protein S5. The interaction surface between S4 and S5 is involved in control of translational fidelity.

The protein resides in the plastid. It is found in the chloroplast. In terms of biological role, one of the primary rRNA binding proteins, it binds directly to 16S rRNA where it nucleates assembly of the body of the 30S subunit. Its function is as follows. With S5 and S12 plays an important role in translational accuracy. The sequence is that of Small ribosomal subunit protein uS4c (rps4) from Chloranthus spicatus (Chulantree).